The sequence spans 244 residues: tRNA (guanine-N(1)-)-methyltransferase (244 aa).

S-adenosyl-L-methionine contacts are provided by residues Gly113 and 133–138 (IGDFVL).

This sequence belongs to the RNA methyltransferase TrmD family. As to quaternary structure, homodimer.

The protein resides in the cytoplasm. It carries out the reaction guanosine(37) in tRNA + S-adenosyl-L-methionine = N(1)-methylguanosine(37) in tRNA + S-adenosyl-L-homocysteine + H(+). Its function is as follows. Specifically methylates guanosine-37 in various tRNAs. The sequence is that of tRNA (guanine-N(1)-)-methyltransferase from Bacillus pumilus (strain SAFR-032).